Here is a 287-residue protein sequence, read N- to C-terminus: 4-diphosphocytidyl-2-C-methyl-D-erythritol kinase (287 aa).

Residue Lys11 is part of the active site. Residue 93–103 (PFGAGLGGGSS) coordinates ATP. The active site involves Asp135.

The protein belongs to the GHMP kinase family. IspE subfamily.

The catalysed reaction is 4-CDP-2-C-methyl-D-erythritol + ATP = 4-CDP-2-C-methyl-D-erythritol 2-phosphate + ADP + H(+). The protein operates within isoprenoid biosynthesis; isopentenyl diphosphate biosynthesis via DXP pathway; isopentenyl diphosphate from 1-deoxy-D-xylulose 5-phosphate: step 3/6. Its function is as follows. Catalyzes the phosphorylation of the position 2 hydroxy group of 4-diphosphocytidyl-2C-methyl-D-erythritol. This is 4-diphosphocytidyl-2-C-methyl-D-erythritol kinase from Pelodictyon phaeoclathratiforme (strain DSM 5477 / BU-1).